Here is a 969-residue protein sequence, read N- to C-terminus: Lateral signaling target protein 2 homolog (969 aa).

Lys-87 participates in a covalent cross-link: Glycyl lysine isopeptide (Lys-Gly) (interchain with G-Cter in ubiquitin). Disordered regions lie at residues 290 to 323 (QDGEFPTSSTNDPSASTGPDSQTEELEKEKGVEE), 336 to 360 (SVWKEEEEKQVLPESSSESEEEEPI), 390 to 437 (STLL…YHDD), and 715 to 777 (RSEC…DMSE). A compositionally biased stretch (polar residues) spans 295-310 (PTSSTNDPSASTGPDS). The span at 336 to 346 (SVWKEEEEKQV) shows a compositional bias: basic and acidic residues. Positions 391 to 402 (TLLSPPSQNQSP) are enriched in polar residues. Residues 411 to 423 (GSSLEGSSATSST) are compositionally biased toward low complexity. Positions 715 to 729 (RSECFGKQSKDDNRK) are enriched in basic and acidic residues. 2 stretches are compositionally biased toward low complexity: residues 732–745 (SSSQESPLSSVPSS) and 756–769 (SLSSSYAPSPVSSL). The FYVE-type zinc-finger motif lies at 899 to 959 (DEACNSCIAC…VCTHCYMFHV (61 aa)). 8 residues coordinate Zn(2+): Cys-905, Cys-908, Cys-921, Cys-924, Cys-929, Cys-932, Cys-951, and Cys-954.

The protein belongs to the lst-2 family. Monoubiquitination at Lys-87 prevents binding to phosphatidylinositol 3-phosphate (PI3P) and localization to early endosome membranes.

Its subcellular location is the cytoplasm. The protein resides in the cytosol. It is found in the early endosome membrane. Negative regulator of epidermal growth factor receptor (EGFR) signaling. Acts by promoting EGFR degradation in endosomes when not monoubiquitinated. This chain is Lateral signaling target protein 2 homolog (zfyve28), found in Danio rerio (Zebrafish).